A 468-amino-acid chain; its full sequence is 6-phospho-beta-galactosidase (468 aa).

D-galactose 6-phosphate is bound by residues glutamine 19, histidine 116, asparagine 159, glutamate 160, and asparagine 297. The active-site Proton donor is glutamate 160. The Nucleophile role is filled by glutamate 375. Residues serine 428, tryptophan 429, lysine 435, and tyrosine 437 each coordinate D-galactose 6-phosphate.

It belongs to the glycosyl hydrolase 1 family.

The catalysed reaction is a 6-phospho-beta-D-galactoside + H2O = D-galactose 6-phosphate + an alcohol. It functions in the pathway carbohydrate metabolism; lactose degradation; D-galactose 6-phosphate and beta-D-glucose from lactose 6-phosphate: step 1/1. This chain is 6-phospho-beta-galactosidase, found in Streptococcus pneumoniae (strain JJA).